Reading from the N-terminus, the 128-residue chain is Translation initiation factor 5A (128 aa).

The residue at position 35 (K35) is a Hypusine.

Belongs to the eIF-5A family.

The protein localises to the cytoplasm. Functionally, functions by promoting the formation of the first peptide bond. This chain is Translation initiation factor 5A (eIF5A), found in Methanocella arvoryzae (strain DSM 22066 / NBRC 105507 / MRE50).